Reading from the N-terminus, the 290-residue chain is Urease accessory protein UreD (290 aa).

The protein belongs to the UreD family. As to quaternary structure, ureD, UreF and UreG form a complex that acts as a GTP-hydrolysis-dependent molecular chaperone, activating the urease apoprotein by helping to assemble the nickel containing metallocenter of UreC. The UreE protein probably delivers the nickel.

Its subcellular location is the cytoplasm. Required for maturation of urease via the functional incorporation of the urease nickel metallocenter. In Paenarthrobacter aurescens (strain TC1), this protein is Urease accessory protein UreD.